The following is a 799-amino-acid chain: Protein scabrous (799 aa).

The first 51 residues, 1–51, serve as a signal peptide directing secretion; the sequence is MRDWQTFPDLQKKKVSRDHLNCPATMAGSNVLWPILLAVVLLQISVAFVSG. The tract at residues 287-316 is disordered; that stretch reads TRKDGSSASVEEESGSQEANQEQTGLETTA. Asparagine 372 carries an N-linked (GlcNAc...) asparagine glycan. A compositionally biased stretch (basic residues) spans 489–498; that stretch reads LNKPHKRPHH. A disordered region spans residues 489-509; sequence LNKPHKRPHHQNVQAQMPQDD. One can recognise a Fibrinogen C-terminal domain in the interval 533 to 737; that stretch reads AIINKLPHDC…SSRMLVKRLP (205 aa). A disulfide bridge links cysteine 542 with cysteine 568. Residues asparagine 587, asparagine 618, and asparagine 660 are each glycosylated (N-linked (GlcNAc...) asparagine). Cysteine 687 and cysteine 700 are oxidised to a cystine. 2 N-linked (GlcNAc...) asparagine glycosylation sites follow: asparagine 744 and asparagine 787.

Post-translationally, possesses five pairs of dibasic residues that may be the target of proteolytic processing.

The protein localises to the late endosome. Functionally, involved in regulation of neurogenesis. May encode a lateral inhibitor of R8 differentiation. In conjunction with Gp150, promotes Notch activation in response to Delta by regulating acquisition of insensitivity to Delta in a subset of cells. The protein is Protein scabrous (sca) of Drosophila melanogaster (Fruit fly).